We begin with the raw amino-acid sequence, 55 residues long: Large ribosomal subunit protein bL33 (55 aa).

This sequence belongs to the bacterial ribosomal protein bL33 family.

The protein is Large ribosomal subunit protein bL33 of Aliivibrio salmonicida (strain LFI1238) (Vibrio salmonicida (strain LFI1238)).